Reading from the N-terminus, the 473-residue chain is Ribulose bisphosphate carboxylase large chain 1 (473 aa).

Residues Asn-116 and Thr-166 each coordinate substrate. Catalysis depends on Lys-168, which acts as the Proton acceptor. Lys-170 provides a ligand contact to substrate. Mg(2+) contacts are provided by Lys-194, Asp-196, and Glu-197. Lys-194 carries the post-translational modification N6-carboxylysine. Catalysis depends on His-287, which acts as the Proton acceptor. Arg-288, His-320, and Ser-372 together coordinate substrate.

This sequence belongs to the RuBisCO large chain family. Type I subfamily. Heterohexadecamer of 8 large chains and 8 small chains. It depends on Mg(2+) as a cofactor.

The enzyme catalyses 2 (2R)-3-phosphoglycerate + 2 H(+) = D-ribulose 1,5-bisphosphate + CO2 + H2O. It catalyses the reaction D-ribulose 1,5-bisphosphate + O2 = 2-phosphoglycolate + (2R)-3-phosphoglycerate + 2 H(+). Its function is as follows. RuBisCO catalyzes two reactions: the carboxylation of D-ribulose 1,5-bisphosphate, the primary event in carbon dioxide fixation, as well as the oxidative fragmentation of the pentose substrate. Both reactions occur simultaneously and in competition at the same active site. This is Ribulose bisphosphate carboxylase large chain 1 from Acidithiobacillus ferrooxidans (Thiobacillus ferrooxidans).